A 207-amino-acid polypeptide reads, in one-letter code: Urease accessory protein UreG (207 aa).

14 to 21 provides a ligand contact to GTP; that stretch reads GPVGSGKT.

The protein belongs to the SIMIBI class G3E GTPase family. UreG subfamily. Homodimer. UreD, UreF and UreG form a complex that acts as a GTP-hydrolysis-dependent molecular chaperone, activating the urease apoprotein by helping to assemble the nickel containing metallocenter of UreC. The UreE protein probably delivers the nickel.

It localises to the cytoplasm. Facilitates the functional incorporation of the urease nickel metallocenter. This process requires GTP hydrolysis, probably effectuated by UreG. The chain is Urease accessory protein UreG from Pseudomonas putida (strain GB-1).